A 374-amino-acid polypeptide reads, in one-letter code: NADH-quinone oxidoreductase subunit D 1 (374 aa).

The protein belongs to the complex I 49 kDa subunit family. In terms of assembly, NDH-1 is composed of 14 different subunits. Subunits NuoB, C, D, E, F, and G constitute the peripheral sector of the complex.

It is found in the cell membrane. It carries out the reaction a quinone + NADH + 5 H(+)(in) = a quinol + NAD(+) + 4 H(+)(out). NDH-1 shuttles electrons from NADH, via FMN and iron-sulfur (Fe-S) centers, to quinones in the respiratory chain. The immediate electron acceptor for the enzyme in this species is believed to be ubiquinone. Couples the redox reaction to proton translocation (for every two electrons transferred, four hydrogen ions are translocated across the cytoplasmic membrane), and thus conserves the redox energy in a proton gradient. The sequence is that of NADH-quinone oxidoreductase subunit D 1 from Roseiflexus sp. (strain RS-1).